The chain runs to 273 residues: Ethanolamine ammonia-lyase small subunit (273 aa).

Residues V164, E185, and C214 each contribute to the adenosylcob(III)alamin site.

Belongs to the EutC family. The basic unit is a heterodimer which dimerizes to form tetramers. The heterotetramers trimerize; 6 large subunits form a core ring with 6 small subunits projecting outwards. Adenosylcob(III)alamin serves as cofactor.

Its subcellular location is the bacterial microcompartment. It carries out the reaction ethanolamine = acetaldehyde + NH4(+). It participates in amine and polyamine degradation; ethanolamine degradation. Its function is as follows. Catalyzes the deamination of various vicinal amino-alcohols to oxo compounds. Allows this organism to utilize ethanolamine as the sole source of nitrogen and carbon in the presence of external vitamin B12. This is Ethanolamine ammonia-lyase small subunit from Pseudomonas paraeruginosa (strain DSM 24068 / PA7) (Pseudomonas aeruginosa (strain PA7)).